The following is a 423-amino-acid chain: Histidine--tRNA ligase (423 aa).

This sequence belongs to the class-II aminoacyl-tRNA synthetase family. As to quaternary structure, homodimer.

The protein localises to the cytoplasm. It carries out the reaction tRNA(His) + L-histidine + ATP = L-histidyl-tRNA(His) + AMP + diphosphate + H(+). This chain is Histidine--tRNA ligase, found in Actinobacillus pleuropneumoniae serotype 7 (strain AP76).